The primary structure comprises 89 residues: Small ribosomal subunit protein uS15 (89 aa).

The protein belongs to the universal ribosomal protein uS15 family. As to quaternary structure, part of the 30S ribosomal subunit. Forms a bridge to the 50S subunit in the 70S ribosome, contacting the 23S rRNA.

In terms of biological role, one of the primary rRNA binding proteins, it binds directly to 16S rRNA where it helps nucleate assembly of the platform of the 30S subunit by binding and bridging several RNA helices of the 16S rRNA. Functionally, forms an intersubunit bridge (bridge B4) with the 23S rRNA of the 50S subunit in the ribosome. This chain is Small ribosomal subunit protein uS15, found in Shewanella halifaxensis (strain HAW-EB4).